The primary structure comprises 202 residues: Translation initiation factor IF-3 (202 aa).

Residues 178-202 (TPRKTPLLKKESETTEPKKALRSIN) are disordered. A compositionally biased stretch (basic and acidic residues) spans 185 to 196 (LKKESETTEPKK).

Belongs to the IF-3 family. As to quaternary structure, monomer.

It is found in the cytoplasm. IF-3 binds to the 30S ribosomal subunit and shifts the equilibrium between 70S ribosomes and their 50S and 30S subunits in favor of the free subunits, thus enhancing the availability of 30S subunits on which protein synthesis initiation begins. This chain is Translation initiation factor IF-3, found in Prochlorococcus marinus (strain NATL1A).